Here is a 540-residue protein sequence, read N- to C-terminus: Phosphoenolpyruvate carboxykinase (ATP) (540 aa).

Arg-65 provides a ligand contact to substrate. Residue Lys-87 is modified to N6-acetyllysine. Residues Tyr-207 and Lys-213 each contribute to the substrate site. ATP contacts are provided by residues Lys-213, His-232, and 248-256; that span reads GLSGTGKTT. Positions 213 and 232 each coordinate Mn(2+). A Mn(2+)-binding site is contributed by Asp-269. Residues Glu-297, Arg-333, 449–450, and Thr-455 each bind ATP; that span reads RI. Residue Arg-333 coordinates substrate. An N6-acetyllysine modification is found at Lys-523.

The protein belongs to the phosphoenolpyruvate carboxykinase (ATP) family. In terms of assembly, monomer. Requires Mn(2+) as cofactor.

The protein resides in the cytoplasm. It carries out the reaction oxaloacetate + ATP = phosphoenolpyruvate + ADP + CO2. Its pathway is carbohydrate biosynthesis; gluconeogenesis. In terms of biological role, involved in the gluconeogenesis. Catalyzes the conversion of oxaloacetate (OAA) to phosphoenolpyruvate (PEP) through direct phosphoryl transfer between the nucleoside triphosphate and OAA. The protein is Phosphoenolpyruvate carboxykinase (ATP) of Escherichia coli O157:H7.